The sequence spans 264 residues: Endonuclease V (264 aa).

Mg(2+)-binding residues include Asp72 and Asp137.

This sequence belongs to the endonuclease V family. It depends on Mg(2+) as a cofactor.

The protein localises to the cytoplasm. The catalysed reaction is Endonucleolytic cleavage at apurinic or apyrimidinic sites to products with a 5'-phosphate.. DNA repair enzyme involved in the repair of deaminated bases. Selectively cleaves double-stranded DNA at the second phosphodiester bond 3' to a deoxyinosine leaving behind the intact lesion on the nicked DNA. The protein is Endonuclease V of Halobacterium salinarum (strain ATCC 700922 / JCM 11081 / NRC-1) (Halobacterium halobium).